The primary structure comprises 450 residues: 3-phosphoshikimate 1-carboxyvinyltransferase (450 aa).

Positions 28, 29, and 33 each coordinate 3-phosphoshikimate. K28 is a phosphoenolpyruvate binding site. Residues G100 and R128 each contribute to the phosphoenolpyruvate site. Positions 173, 175, 326, and 353 each coordinate 3-phosphoshikimate. Q175 provides a ligand contact to phosphoenolpyruvate. Catalysis depends on D326, which acts as the Proton acceptor. Residues R357 and R402 each coordinate phosphoenolpyruvate.

This sequence belongs to the EPSP synthase family. Monomer.

The protein localises to the cytoplasm. It catalyses the reaction 3-phosphoshikimate + phosphoenolpyruvate = 5-O-(1-carboxyvinyl)-3-phosphoshikimate + phosphate. It functions in the pathway metabolic intermediate biosynthesis; chorismate biosynthesis; chorismate from D-erythrose 4-phosphate and phosphoenolpyruvate: step 6/7. Its function is as follows. Catalyzes the transfer of the enolpyruvyl moiety of phosphoenolpyruvate (PEP) to the 5-hydroxyl of shikimate-3-phosphate (S3P) to produce enolpyruvyl shikimate-3-phosphate and inorganic phosphate. The sequence is that of 3-phosphoshikimate 1-carboxyvinyltransferase from Brucella canis (strain ATCC 23365 / NCTC 10854 / RM-666).